The chain runs to 153 residues: Ribosome maturation factor RimP (153 aa).

This sequence belongs to the RimP family.

Its subcellular location is the cytoplasm. In terms of biological role, required for maturation of 30S ribosomal subunits. The protein is Ribosome maturation factor RimP of Desulforamulus reducens (strain ATCC BAA-1160 / DSM 100696 / MI-1) (Desulfotomaculum reducens).